We begin with the raw amino-acid sequence, 382 residues long: Anhydro-N-acetylmuramic acid kinase (382 aa).

9-16 (GTSLDGID) contacts ATP.

This sequence belongs to the anhydro-N-acetylmuramic acid kinase family.

It carries out the reaction 1,6-anhydro-N-acetyl-beta-muramate + ATP + H2O = N-acetyl-D-muramate 6-phosphate + ADP + H(+). It participates in amino-sugar metabolism; 1,6-anhydro-N-acetylmuramate degradation. The protein operates within cell wall biogenesis; peptidoglycan recycling. Catalyzes the specific phosphorylation of 1,6-anhydro-N-acetylmuramic acid (anhMurNAc) with the simultaneous cleavage of the 1,6-anhydro ring, generating MurNAc-6-P. Is required for the utilization of anhMurNAc either imported from the medium or derived from its own cell wall murein, and thus plays a role in cell wall recycling. This is Anhydro-N-acetylmuramic acid kinase from Bacillus cereus (strain Q1).